Consider the following 83-residue polypeptide: Alpha-neurotoxin NTX-1 (83 aa).

Residues 1–21 form the signal peptide; that stretch reads MKTLLLTLLVVTIVCLDLGYT. Intrachain disulfides connect Cys24/Cys45, Cys38/Cys62, Cys64/Cys75, and Cys76/Cys81.

This sequence belongs to the three-finger toxin family. Short-chain subfamily. Type I alpha-neurotoxin sub-subfamily. In terms of tissue distribution, expressed by the venom gland.

The protein localises to the secreted. Functionally, binds to muscle nicotinic acetylcholine receptor (nAChR) and inhibit acetylcholine from binding to the receptor, thereby impairing neuromuscular transmission. The protein is Alpha-neurotoxin NTX-1 of Naja sputatrix (Malayan spitting cobra).